The chain runs to 180 residues: ATP-dependent protease subunit HslV (180 aa).

The active site involves T6. Positions 164, 167, and 170 each coordinate Na(+).

The protein belongs to the peptidase T1B family. HslV subfamily. A double ring-shaped homohexamer of HslV is capped on each side by a ring-shaped HslU homohexamer. The assembly of the HslU/HslV complex is dependent on binding of ATP.

It is found in the cytoplasm. The catalysed reaction is ATP-dependent cleavage of peptide bonds with broad specificity.. Its activity is regulated as follows. Allosterically activated by HslU binding. In terms of biological role, protease subunit of a proteasome-like degradation complex believed to be a general protein degrading machinery. The protein is ATP-dependent protease subunit HslV of Borrelia recurrentis (strain A1).